We begin with the raw amino-acid sequence, 178 residues long: Inorganic pyrophosphatase (178 aa).

Positions 29, 43, and 55 each coordinate substrate. Positions 65, 70, and 102 each coordinate Mg(2+). A substrate-binding site is contributed by Tyr141.

This sequence belongs to the PPase family. Homohexamer. Requires Mg(2+) as cofactor.

It is found in the cytoplasm. It catalyses the reaction diphosphate + H2O = 2 phosphate + H(+). Catalyzes the hydrolysis of inorganic pyrophosphate (PPi) forming two phosphate ions. The protein is Inorganic pyrophosphatase of Rickettsia typhi (strain ATCC VR-144 / Wilmington).